We begin with the raw amino-acid sequence, 167 residues long: NAD(P)H-quinone oxidoreductase subunit I, chloroplastic (167 aa).

4Fe-4S ferredoxin-type domains lie at 55 to 84 and 95 to 124; these read GRIHFEFDKCIACEVCVRVCPIDLPVVDWK and LNYSIDFGICIFCGNCVEYCPTNCLSMTEE. [4Fe-4S] cluster-binding residues include Cys64, Cys67, Cys70, Cys74, Cys104, Cys107, Cys110, and Cys114.

Belongs to the complex I 23 kDa subunit family. In terms of assembly, NDH is composed of at least 16 different subunits, 5 of which are encoded in the nucleus. The cofactor is [4Fe-4S] cluster.

Its subcellular location is the plastid. The protein localises to the chloroplast thylakoid membrane. It carries out the reaction a plastoquinone + NADH + (n+1) H(+)(in) = a plastoquinol + NAD(+) + n H(+)(out). The catalysed reaction is a plastoquinone + NADPH + (n+1) H(+)(in) = a plastoquinol + NADP(+) + n H(+)(out). In terms of biological role, NDH shuttles electrons from NAD(P)H:plastoquinone, via FMN and iron-sulfur (Fe-S) centers, to quinones in the photosynthetic chain and possibly in a chloroplast respiratory chain. The immediate electron acceptor for the enzyme in this species is believed to be plastoquinone. Couples the redox reaction to proton translocation, and thus conserves the redox energy in a proton gradient. This chain is NAD(P)H-quinone oxidoreductase subunit I, chloroplastic, found in Pelargonium hortorum (Common geranium).